A 447-amino-acid chain; its full sequence is Trigger factor (447 aa).

One can recognise a PPIase FKBP-type domain in the interval 164–249 (GNQVTFDFEG…VKLVEKSKLP (86 aa)).

This sequence belongs to the FKBP-type PPIase family. Tig subfamily.

The protein localises to the cytoplasm. It catalyses the reaction [protein]-peptidylproline (omega=180) = [protein]-peptidylproline (omega=0). Its function is as follows. Involved in protein export. Acts as a chaperone by maintaining the newly synthesized protein in an open conformation. Functions as a peptidyl-prolyl cis-trans isomerase. This chain is Trigger factor, found in Psychrobacter arcticus (strain DSM 17307 / VKM B-2377 / 273-4).